The sequence spans 550 residues: MCFNQRILIGSISTEQLNKTIVIIGWIKRIKKLGEINFIIVGDKSGTIQVTCKDKEQIQQLTREDIVIVKAKLQRLDSVRFELINPTIKLFSKSKTPPLIIEDETDALEEVRLKYRYLDLRRRLMQKRLLLRHQFILAIRNWFNQQGFIEIETPTLSKSTPEGAQDFLVPARIRKDCFYALVQSPQIYKQLLMIAGVEKYFQIARVYRDEDSRKDRQPEHTQIDFEISFCNQKMIMNLVEKLFFSVFLDVFQIKIKKTFPVFKFSELFERFGSDKPDLRYGFEIKDFTSLFQDHQNQFTKLIEAKGIIGGIELTNIELSTDKIKALRKIAKDHDVSLEVHNKNNSTLKTSIKCDEKNTLLLVANKSKKKAWTALGAIRNELKYHLDIVKPNQYSFCWVVDFPLYDFDEKTNQWISNHNIFSKPKQEWIDNFESNKNEALSEQFDLVLNGFEIGSGSIRINDPIVQKRLMNSLNIDPNKFAFLLEAYQYGAPVHGGMGLGIDRLMMILNQTDNIREVIAFPKNNHGIEVHTNAPDKIDKEEVKWWIKELVK.

An L-aspartate-binding site is contributed by E162. Positions 186-189 (QIYK) are aspartate. R208 provides a ligand contact to L-aspartate. ATP is bound by residues 208-210 (RDE) and Q217. An L-aspartate-binding site is contributed by H417. E451 is a binding site for ATP. R458 serves as a coordination point for L-aspartate. Residue 499-502 (GIDR) participates in ATP binding.

This sequence belongs to the class-II aminoacyl-tRNA synthetase family. Type 1 subfamily. Homodimer.

It is found in the cytoplasm. It carries out the reaction tRNA(Asp) + L-aspartate + ATP = L-aspartyl-tRNA(Asp) + AMP + diphosphate. Its function is as follows. Catalyzes the attachment of L-aspartate to tRNA(Asp) in a two-step reaction: L-aspartate is first activated by ATP to form Asp-AMP and then transferred to the acceptor end of tRNA(Asp). The polypeptide is Aspartate--tRNA ligase (Mycoplasma genitalium (strain ATCC 33530 / DSM 19775 / NCTC 10195 / G37) (Mycoplasmoides genitalium)).